Consider the following 223-residue polypeptide: Ribose-5-phosphate isomerase A (223 aa).

Residues 32–35 (TGST), 85–88 (DGAD), and 98–101 (KGGG) contribute to the substrate site. Glu107 (proton acceptor) is an active-site residue. A substrate-binding site is contributed by Lys125.

Belongs to the ribose 5-phosphate isomerase family. Homodimer.

It catalyses the reaction aldehydo-D-ribose 5-phosphate = D-ribulose 5-phosphate. It participates in carbohydrate degradation; pentose phosphate pathway; D-ribose 5-phosphate from D-ribulose 5-phosphate (non-oxidative stage): step 1/1. Catalyzes the reversible conversion of ribose-5-phosphate to ribulose 5-phosphate. This is Ribose-5-phosphate isomerase A from Pseudomonas syringae pv. syringae (strain B728a).